Reading from the N-terminus, the 317-residue chain is 4-diphosphocytidyl-2-C-methyl-D-erythritol kinase (317 aa).

Lys11 is an active-site residue. 99–109 (PVAAGLAGGST) is an ATP binding site. The active site involves Asp141.

It belongs to the GHMP kinase family. IspE subfamily.

The enzyme catalyses 4-CDP-2-C-methyl-D-erythritol + ATP = 4-CDP-2-C-methyl-D-erythritol 2-phosphate + ADP + H(+). The protein operates within isoprenoid biosynthesis; isopentenyl diphosphate biosynthesis via DXP pathway; isopentenyl diphosphate from 1-deoxy-D-xylulose 5-phosphate: step 3/6. Its function is as follows. Catalyzes the phosphorylation of the position 2 hydroxy group of 4-diphosphocytidyl-2C-methyl-D-erythritol. This is 4-diphosphocytidyl-2-C-methyl-D-erythritol kinase from Nostoc sp. (strain PCC 7120 / SAG 25.82 / UTEX 2576).